Here is a 37-residue protein sequence, read N- to C-terminus: Potassium channel toxin alpha-KTx 1.4 (37 aa).

3 disulfide bridges follow: Cys7/Cys28, Cys13/Cys33, and Cys17/Cys35.

The protein belongs to the short scorpion toxin superfamily. Potassium channel inhibitor family. Alpha-KTx 01 subfamily. In terms of tissue distribution, expressed by the venom gland.

The protein localises to the secreted. In terms of biological role, blocks selectively the high conductance calcium-activated (maxi-K) potassium channels. The chain is Potassium channel toxin alpha-KTx 1.4 from Centruroides limbatus (Bark scorpion).